Reading from the N-terminus, the 166-residue chain is Small ribosomal subunit protein uS5 (166 aa).

The 64-residue stretch at 11 to 74 (LQEKLIAVNR…EKARRNMINV (64 aa)) folds into the S5 DRBM domain.

Belongs to the universal ribosomal protein uS5 family. Part of the 30S ribosomal subunit. Contacts proteins S4 and S8.

Functionally, with S4 and S12 plays an important role in translational accuracy. Located at the back of the 30S subunit body where it stabilizes the conformation of the head with respect to the body. This chain is Small ribosomal subunit protein uS5, found in Actinobacillus succinogenes (strain ATCC 55618 / DSM 22257 / CCUG 43843 / 130Z).